A 134-amino-acid polypeptide reads, in one-letter code: Protein NrdI (134 aa).

This sequence belongs to the NrdI family.

In terms of biological role, probably involved in ribonucleotide reductase function. The chain is Protein NrdI from Yersinia pseudotuberculosis serotype O:1b (strain IP 31758).